A 380-amino-acid chain; its full sequence is tRNA pseudouridine synthase B (380 aa).

The active-site Nucleophile is the Asp63. Positions 309-339 (QNVEDDNDDNDDNDDNDDNDDNDDNDDNDDN) are disordered. The span at 311-338 (VEDDNDDNDDNDDNDDNDDNDDNDDNDD) shows a compositional bias: acidic residues.

It belongs to the pseudouridine synthase TruB family. Type 1 subfamily.

It carries out the reaction uridine(55) in tRNA = pseudouridine(55) in tRNA. Its function is as follows. Responsible for synthesis of pseudouridine from uracil-55 in the psi GC loop of transfer RNAs. This is tRNA pseudouridine synthase B from Psychrobacter arcticus (strain DSM 17307 / VKM B-2377 / 273-4).